The chain runs to 451 residues: Tubulin alpha-2 chain (451 aa).

GTP is bound by residues Gln-12, Asp-73, Ser-142, Gly-146, Thr-147, Thr-181, Asn-208, and Asn-230. Mg(2+) is bound at residue Asp-73. Residue Glu-256 is part of the active site.

Belongs to the tubulin family. In terms of assembly, dimer of alpha and beta chains. A typical microtubule is a hollow water-filled tube with an outer diameter of 25 nm and an inner diameter of 15 nM. Alpha-beta heterodimers associate head-to-tail to form protofilaments running lengthwise along the microtubule wall with the beta-tubulin subunit facing the microtubule plus end conferring a structural polarity. Microtubules usually have 13 protofilaments but different protofilament numbers can be found in some organisms and specialized cells. The cofactor is Mg(2+).

It localises to the cytoplasm. The protein resides in the cytoskeleton. It catalyses the reaction GTP + H2O = GDP + phosphate + H(+). In terms of biological role, tubulin is the major constituent of microtubules, a cylinder consisting of laterally associated linear protofilaments composed of alpha- and beta-tubulin heterodimers. Microtubules grow by the addition of GTP-tubulin dimers to the microtubule end, where a stabilizing cap forms. Below the cap, tubulin dimers are in GDP-bound state, owing to GTPase activity of alpha-tubulin. The sequence is that of Tubulin alpha-2 chain (tubB) from Emericella nidulans (strain FGSC A4 / ATCC 38163 / CBS 112.46 / NRRL 194 / M139) (Aspergillus nidulans).